The following is a 60-amino-acid chain: Large ribosomal subunit protein uL30 (60 aa).

This sequence belongs to the universal ribosomal protein uL30 family. In terms of assembly, part of the 50S ribosomal subunit.

The sequence is that of Large ribosomal subunit protein uL30 from Shewanella loihica (strain ATCC BAA-1088 / PV-4).